Consider the following 601-residue polypeptide: Leucine zipper putative tumor suppressor 1 (601 aa).

A lipid anchor (N-myristoyl glycine) is attached at Gly-2. Positions 135 to 190 are disordered; the sequence is GAILHSSPESTNHQLHPMPPDKPKEQELKPGLCSGALSDSGRNSMSSLPTHSTTSS. The segment covering 153-162 has biased composition (basic and acidic residues); sequence PPDKPKEQEL. The span at 174-190 shows a compositional bias: polar residues; it reads SGRNSMSSLPTHSTTSS. Positions 255–573 form a coiled coil; that stretch reads PLSTDECTIQ…RLEKALQQLA (319 aa).

It belongs to the LZTS family. In terms of assembly, binds EEF1G, TLK2 and CDK1. Phosphorylated on serine residues. Hyperphosphorylated by the cAMP-dependent kinase PKA during cell-cycle progression. As to expression, highly expressed in brain, in particular in cortex, the CA2 region of the hippocampus, olfactory bulb, striatum and pons. Not detectable in the other tissues tested.

Its subcellular location is the cytoplasm. The protein localises to the cell membrane. It localises to the cell projection. The protein resides in the dendritic spine. It is found in the postsynaptic density. Its subcellular location is the synapse. Its function is as follows. Involved in the regulation of cell growth. May stabilize the active CDC2-cyclin B1 complex and thereby contribute to the regulation of the cell cycle and the prevention of uncontrolled cell proliferation. May act as tumor suppressor. The protein is Leucine zipper putative tumor suppressor 1 (Lzts1) of Rattus norvegicus (Rat).